A 789-amino-acid chain; its full sequence is Zinc finger FYVE domain-containing protein 1 (789 aa).

The tract at residues 416–788 (MAHSSFFPDE…LSVMTGKGPL (373 aa)) is required for localization in the lipid droplets. 2 FYVE-type zinc fingers span residues 598–659 (NSQI…EARN) and 715–775 (DHEI…KKPA). Cys604, Cys607, Cys620, Cys623, Cys628, Cys631, Cys651, Cys654, Cys721, Cys724, Cys737, Cys740, Cys745, Cys748, Cys767, and Cys770 together coordinate Zn(2+).

Interacts with RAB18 (in GTP-bound form). Interacts with BSCL2 in a RAB18-dependent manner. Interacts with ZW10.

The protein resides in the golgi apparatus. Its subcellular location is the golgi stack. It localises to the endoplasmic reticulum. It is found in the preautophagosomal structure. The protein localises to the lipid droplet. The protein resides in the mitochondrion. Plays a role in the formation of lipid droplets (LDs) which are storage organelles at the center of lipid and energy homeostasis. Regulates the morphology, size and distribution of LDs. Mediates the formation of endoplasmic reticulum-lipid droplets (ER-LD) contact sites by forming a complex with RAB18 and ZW10. Binds to phosphatidylinositol 3-phosphate (PtdIns3P) through FYVE-type zinc finger. This chain is Zinc finger FYVE domain-containing protein 1 (ZFYVE1), found in Pongo abelii (Sumatran orangutan).